Consider the following 138-residue polypeptide: Putative nickel-responsive regulator (138 aa).

Ni(2+) contacts are provided by histidine 80, histidine 91, histidine 93, and cysteine 99.

It belongs to the transcriptional regulatory CopG/NikR family. The cofactor is Ni(2+).

Transcriptional regulator. The polypeptide is Putative nickel-responsive regulator (Campylobacter hominis (strain ATCC BAA-381 / DSM 21671 / CCUG 45161 / LMG 19568 / NCTC 13146 / CH001A)).